The sequence spans 677 residues: WD and tetratricopeptide repeats protein 1 (677 aa).

5 WD repeats span residues G45–S84, G88–M129, D132–E172, G182–K222, and R265–T305. The residue at position 352 (S352) is a Phosphoserine. TPR repeat units follow at residues L361–N394 and M396–H431. Positions E489 to K509 are disordered. S511 carries the post-translational modification Phosphoserine. WD repeat units follow at residues N535–V575 and G578–T617. The tract at residues S655–S677 is disordered.

It participates in protein modification; protein ubiquitination. In terms of biological role, may function as a substrate receptor for CUL4-DDB1 E3 ubiquitin-protein ligase complex. The sequence is that of WD and tetratricopeptide repeats protein 1 (Wdtc1) from Mus musculus (Mouse).